The following is a 254-amino-acid chain: Phosphoglycerate mutase 1 (254 aa).

Substrate contacts are provided by residues 10-17 and 23-24; these read RHGESAWN and SG. H11 acts as the Tele-phosphohistidine intermediate in catalysis. S14 and S23 each carry phosphoserine. The residue at position 26 (Y26) is a Phosphotyrosine. S31 is subject to Phosphoserine. Substrate-binding positions include R62, 89–92, and K100; that span reads ERHY. E89 acts as the Proton donor/acceptor in catalysis. The residue at position 106 (K106) is an N6-acetyllysine. Residue 116-117 participates in substrate binding; sequence RR. S118 is modified (phosphoserine). 187 to 188 contacts substrate; the sequence is GN. Position 251 is an N6-acetyllysine; alternate (K251). At K251 the chain carries N6-succinyllysine; alternate. Residues K253 and K254 each carry the N6-acetyllysine modification.

Belongs to the phosphoglycerate mutase family. BPG-dependent PGAM subfamily. In terms of assembly, homodimer. In terms of processing, acetylated at Lys-253, Lys-253 and Lys-254 under high glucose condition. Acetylation increases catalytic activity. Under glucose restriction SIRT1 levels dramatically increase and it deacetylates the enzyme. In terms of tissue distribution, expressed in the liver and brain. Not found in the muscle.

The catalysed reaction is (2R)-2-phosphoglycerate = (2R)-3-phosphoglycerate. It catalyses the reaction (2R)-3-phospho-glyceroyl phosphate = (2R)-2,3-bisphosphoglycerate + H(+). Its function is as follows. Catalyzes the interconversion of 2-phosphoglycerate and 3-phosphoglyceratea crucial step in glycolysis, by using 2,3-bisphosphoglycerate. Also catalyzes the interconversion of (2R)-2,3-bisphosphoglycerate and (2R)-3-phospho-glyceroyl phosphate. The chain is Phosphoglycerate mutase 1 from Homo sapiens (Human).